The primary structure comprises 157 residues: Protein Smg homolog (157 aa).

The protein belongs to the Smg family.

This Aeromonas hydrophila subsp. hydrophila (strain ATCC 7966 / DSM 30187 / BCRC 13018 / CCUG 14551 / JCM 1027 / KCTC 2358 / NCIMB 9240 / NCTC 8049) protein is Protein Smg homolog.